The following is a 44-amino-acid chain: Omega-plectoxin-Pt1a (44 aa).

5 cysteine pairs are disulfide-bonded: Cys3–Cys17, Cys10–Cys23, Cys16–Cys35, Cys20–Cys42, and Cys25–Cys33. A Threonine amide modification is found at Thr44. Thr44 is lipidated: O-palmitoyl threonine.

It belongs to the neurotoxin 02 (plectoxin) family. 02 (plectoxin) subfamily. Post-translationally, contains 5 disulfide bonds. Acylation by palmitate is required for biological activity. In terms of tissue distribution, expressed by the venom gland.

Its subcellular location is the secreted. Functionally, toxin that inhibits presynaptic voltage-gated calcium channel (Cav) in Drosophila nerve terminals, most likely through specific block of the Cav2 channel (known as Dmca1A). This is Omega-plectoxin-Pt1a from Plectreurys tristis (Spider).